A 106-amino-acid polypeptide reads, in one-letter code: Gas vesicle protein J (106 aa).

It belongs to the gas vesicle GvpA family.

It localises to the gas vesicle. Its function is as follows. A minor component of the gas vesicle, might be involved in nucleating gas vesicle formation. Gas vesicles are hollow, gas filled proteinaceous nanostructures found in some microorganisms. It is not clear what function gas vesicles perform in soil bacteria. This Streptomyces sp. (strain CB03234) protein is Gas vesicle protein J.